A 637-amino-acid chain; its full sequence is Chaperone protein HtpG (637 aa).

Residues 1 to 345 (MSQQETHGFQ…SNDLPLNVSR (345 aa)) form an a; substrate-binding region. The tract at residues 346 to 562 (EILQDNQVTT…EGEMSTQMIK (217 aa)) is b. The interval 563 to 637 (LMQAAGQAVP…MNQMLLANAK (75 aa)) is c.

It belongs to the heat shock protein 90 family. Homodimer.

The protein localises to the cytoplasm. Its function is as follows. Molecular chaperone. Has ATPase activity. This is Chaperone protein HtpG from Shewanella denitrificans (strain OS217 / ATCC BAA-1090 / DSM 15013).